Here is a 188-residue protein sequence, read N- to C-terminus: Phosphatidylinositol N-acetylglucosaminyltransferase subunit H (188 aa).

Belongs to the PIGH family. In terms of assembly, component of the glycosylphosphatidylinositol-N-acetylglucosaminyltransferase (GPI-GnT) complex composed at least by PIGA, PIGC, PIGH, PIGP, PIGQ, PIGY and DPM2. Interacts with PIGQ.

It is found in the cytoplasm. Its pathway is glycolipid biosynthesis; glycosylphosphatidylinositol-anchor biosynthesis. Part of the glycosylphosphatidylinositol-N-acetylglucosaminyltransferase (GPI-GnT) complex that catalyzes the transfer of N-acetylglucosamine from UDP-N-acetylglucosamine to phosphatidylinositol and participates in the first step of GPI biosynthesis. The chain is Phosphatidylinositol N-acetylglucosaminyltransferase subunit H from Homo sapiens (Human).